The following is a 367-amino-acid chain: Uroporphyrinogen decarboxylase (367 aa).

Substrate is bound by residues 27 to 31, D77, Y157, T212, and H333; that span reads RQAGR.

The protein belongs to the uroporphyrinogen decarboxylase family. In terms of assembly, homodimer.

Its subcellular location is the cytoplasm. The enzyme catalyses uroporphyrinogen III + 4 H(+) = coproporphyrinogen III + 4 CO2. It functions in the pathway porphyrin-containing compound metabolism; protoporphyrin-IX biosynthesis; coproporphyrinogen-III from 5-aminolevulinate: step 4/4. Its function is as follows. Catalyzes the decarboxylation of four acetate groups of uroporphyrinogen-III to yield coproporphyrinogen-III. This is Uroporphyrinogen decarboxylase from Cupriavidus metallidurans (strain ATCC 43123 / DSM 2839 / NBRC 102507 / CH34) (Ralstonia metallidurans).